The following is a 95-amino-acid chain: Protein TusB (95 aa).

Belongs to the DsrH/TusB family. As to quaternary structure, heterohexamer, formed by a dimer of trimers. The hexameric TusBCD complex contains 2 copies each of TusB, TusC and TusD. The TusBCD complex interacts with TusE.

It localises to the cytoplasm. In terms of biological role, part of a sulfur-relay system required for 2-thiolation of 5-methylaminomethyl-2-thiouridine (mnm(5)s(2)U) at tRNA wobble positions. The sequence is that of Protein TusB from Klebsiella pneumoniae (strain 342).